Here is a 139-residue protein sequence, read N- to C-terminus: Tetra-peptide repeat homeobox-like protein (139 aa).

Disordered stretches follow at residues Met-1–Gln-22 and Glu-78–Gln-139. Residues Gln-20–Arg-79 constitute a DNA-binding region (homeobox). Over residues Gln-82–Gln-139 the composition is skewed to low complexity.

Belongs to the paired homeobox family.

It localises to the nucleus. Transcription factor required for zygotic genome activation (ZGA), a critical event in early embryonic development during which the developmental control passes from maternally provided mRNAs to the expression of the zygotic genome after fertilization. Protein produced from maternal transcripts that binds and activates expression of key ZGA marker genes, such as NANOGNB, ZSCAN4, DUXB, KLF5 and DPPA3. Binds to regulatory DNA sequences containing a 5'-TAATCC-3' sequence motif. In Homo sapiens (Human), this protein is Tetra-peptide repeat homeobox-like protein.